Here is a 212-residue protein sequence, read N- to C-terminus: Ion-translocating oxidoreductase complex subunit G (212 aa).

The helical transmembrane segment at 9-29 threads the bilayer; it reads GLLLGLFALLCTGLVAIVNQL. At Thr-176 the chain carries FMN phosphoryl threonine.

This sequence belongs to the RnfG family. In terms of assembly, the complex is composed of six subunits: RnfA, RnfB, RnfC, RnfD, RnfE and RnfG. It depends on FMN as a cofactor.

The protein resides in the cell inner membrane. Functionally, part of a membrane-bound complex that couples electron transfer with translocation of ions across the membrane. The sequence is that of Ion-translocating oxidoreductase complex subunit G from Shewanella piezotolerans (strain WP3 / JCM 13877).